The sequence spans 360 residues: MGVSDVFAVSGALEVVLEGVAGKGVMAVVYGSTRTSTIPGISIAGPSPEATLYTPTLDIEYLVAGRPLTLDVVPVSPEGVPTPAVITRAVARAFNIPLLPVDAGSWTEARVPHAKLPSRVTGGRIDVEPGLPSGASERLFREAYMLGSSLARGLDWIAVGESIPGGTTVAAAVMEALGYRAADLVSSSGKDNPRELKKRVVAQALSRLRECGARDVLEIVDCVGDPVHVSIAGLAVGAREAGAFVILAGGTQMGAVLAILSRLGMLDPRSTAVATTKWIALDRGSSIRGIVESIAPGLTVAAAGFSLEGSRYRGLRMYEEGYAKEGVGAGGSLVISLLRGAGVREILEAVESEYGRLLGG.

The protein belongs to the UPF0284 family.

In Aeropyrum pernix (strain ATCC 700893 / DSM 11879 / JCM 9820 / NBRC 100138 / K1), this protein is UPF0284 protein APE_2029.1.